The sequence spans 61 residues: Small ribosomal subunit protein uS14 (61 aa).

Zn(2+) is bound by residues Cys24, Cys27, Cys40, and Cys43.

Belongs to the universal ribosomal protein uS14 family. Zinc-binding uS14 subfamily. Part of the 30S ribosomal subunit. Contacts proteins S3 and S10. It depends on Zn(2+) as a cofactor.

Binds 16S rRNA, required for the assembly of 30S particles and may also be responsible for determining the conformation of the 16S rRNA at the A site. This is Small ribosomal subunit protein uS14 from Fervidobacterium nodosum (strain ATCC 35602 / DSM 5306 / Rt17-B1).